We begin with the raw amino-acid sequence, 511 residues long: Light-independent protochlorophyllide reductase subunit B (511 aa).

A [4Fe-4S] cluster-binding site is contributed by Asp-36. The active-site Proton donor is the Asp-299. 434-435 (GM) is a binding site for substrate.

The protein belongs to the ChlB/BchB/BchZ family. In terms of assembly, protochlorophyllide reductase is composed of three subunits; ChlL, ChlN and ChlB. Forms a heterotetramer of two ChlB and two ChlN subunits. [4Fe-4S] cluster serves as cofactor.

The protein localises to the plastid. It is found in the chloroplast. It catalyses the reaction chlorophyllide a + oxidized 2[4Fe-4S]-[ferredoxin] + 2 ADP + 2 phosphate = protochlorophyllide a + reduced 2[4Fe-4S]-[ferredoxin] + 2 ATP + 2 H2O. Its pathway is porphyrin-containing compound metabolism; chlorophyll biosynthesis (light-independent). Its function is as follows. Component of the dark-operative protochlorophyllide reductase (DPOR) that uses Mg-ATP and reduced ferredoxin to reduce ring D of protochlorophyllide (Pchlide) to form chlorophyllide a (Chlide). This reaction is light-independent. The NB-protein (ChlN-ChlB) is the catalytic component of the complex. The polypeptide is Light-independent protochlorophyllide reductase subunit B (Huperzia lucidula (Shining clubmoss)).